The sequence spans 106 residues: Ferredoxin-2 (106 aa).

4Fe-4S ferredoxin-type domains are found at residues 2 to 29 (YVVT…YEGE) and 30 to 59 (NFLV…GKWL). [3Fe-4S] cluster-binding residues include cysteine 8 and cysteine 16. Positions 20, 39, 42, and 45 each coordinate [4Fe-4S] cluster. Cysteine 49 provides a ligand contact to [3Fe-4S] cluster. The segment at 80–106 (ADADDWKDKPDKTGLLSENPGKGTVCH) is disordered.

[4Fe-4S] cluster serves as cofactor. It depends on [3Fe-4S] cluster as a cofactor.

Ferredoxins are iron-sulfur proteins that transfer electrons in a wide variety of metabolic reactions. The polypeptide is Ferredoxin-2 (Rhodospirillum rubrum).